The sequence spans 290 residues: MPSLKDLKNRIVSVKNTRKITKAMQMVAAANIRRAQESAEAARPYAERMNAVMSSLAGAVGSTDGAPRLLAGTGSDKVHLLVIMTGERGLCGGFNANIAKLAKAKAMELLAQGKTVKILTVGKKGRDALRRDLGQYYIDHIDLSDVKKLSYPVAQKISQNIIDRFEAGEYDVATIFFSVFQSVISQVPTAKQVIPAQFETDAASASAVYDYEPGDQEILTALLPRAVATAIFAALLENNASFNGAQMSAMDNATRNAGDMIDRLTIEYNRSRQAAITKELIEIISGAEAL.

Belongs to the ATPase gamma chain family. F-type ATPases have 2 components, CF(1) - the catalytic core - and CF(0) - the membrane proton channel. CF(1) has five subunits: alpha(3), beta(3), gamma(1), delta(1), epsilon(1). CF(0) has four main subunits: a, b, b' and c.

It localises to the cellular chromatophore membrane. Functionally, produces ATP from ADP in the presence of a proton gradient across the membrane. The gamma chain is believed to be important in regulating ATPase activity and the flow of protons through the CF(0) complex. The chain is ATP synthase gamma chain from Rhodobacter capsulatus (Rhodopseudomonas capsulata).